The primary structure comprises 118 residues: Holo-[acyl-carrier-protein] synthase (118 aa).

Mg(2+) is bound by residues Asp8 and Glu58.

This sequence belongs to the P-Pant transferase superfamily. AcpS family. Requires Mg(2+) as cofactor.

The protein resides in the cytoplasm. The enzyme catalyses apo-[ACP] + CoA = holo-[ACP] + adenosine 3',5'-bisphosphate + H(+). Its function is as follows. Transfers the 4'-phosphopantetheine moiety from coenzyme A to a Ser of acyl-carrier-protein. The chain is Holo-[acyl-carrier-protein] synthase from Streptococcus equi subsp. zooepidemicus (strain MGCS10565).